The sequence spans 78 residues: Small ribosomal subunit protein bS18 (78 aa).

This sequence belongs to the bacterial ribosomal protein bS18 family. As to quaternary structure, part of the 30S ribosomal subunit. Forms a tight heterodimer with protein bS6.

Functionally, binds as a heterodimer with protein bS6 to the central domain of the 16S rRNA, where it helps stabilize the platform of the 30S subunit. The chain is Small ribosomal subunit protein bS18 from Parafrankia sp. (strain EAN1pec).